A 143-amino-acid polypeptide reads, in one-letter code: MAKKVAGQLKLQVKAGSANPSPPIGPALGQRGINIMEFCKAFNAATQEMEKGMPIPVVITYYQDKSFTFAMKQPPVSYWLKKEAKITSGSKTPGKGPKAGTLTKAQIKTIAEAKMKDLNAADIEGAMAMIEGSARAMGLEVVG.

It belongs to the universal ribosomal protein uL11 family. As to quaternary structure, part of the ribosomal stalk of the 50S ribosomal subunit. Interacts with L10 and the large rRNA to form the base of the stalk. L10 forms an elongated spine to which L12 dimers bind in a sequential fashion forming a multimeric L10(L12)X complex. One or more lysine residues are methylated.

Functionally, forms part of the ribosomal stalk which helps the ribosome interact with GTP-bound translation factors. The protein is Large ribosomal subunit protein uL11 of Rhizobium etli (strain CIAT 652).